A 402-amino-acid chain; its full sequence is Homoserine O-acetyltransferase (402 aa).

Residues 1-17 (MDWQTTSADTAPSSFIT) are compositionally biased toward polar residues. The interval 1-39 (MDWQTTSADTAPSSFITEEQDRSLFGKPPASGAWKESDP) is disordered. The AB hydrolase-1 domain occupies 78–388 (NAVLVLHALT…HFGHDGFLIE (311 aa)). The Nucleophile role is filled by S183. Substrate is bound at residue R255. Residues D349 and H382 contribute to the active site. D383 is a binding site for substrate.

This sequence belongs to the AB hydrolase superfamily. MetX family. Homodimer.

The protein localises to the cytoplasm. The catalysed reaction is L-homoserine + acetyl-CoA = O-acetyl-L-homoserine + CoA. It functions in the pathway amino-acid biosynthesis; L-methionine biosynthesis via de novo pathway; O-acetyl-L-homoserine from L-homoserine: step 1/1. Functionally, transfers an acetyl group from acetyl-CoA to L-homoserine, forming acetyl-L-homoserine. The polypeptide is Homoserine O-acetyltransferase (Leifsonia xyli subsp. xyli (strain CTCB07)).